Reading from the N-terminus, the 865-residue chain is Fatty acyl-CoA synthetase and RNA processing-associated kinase 1 (865 aa).

The region spanning 41 to 313 (YILGSTLGEG…LKQIKKHEWL (273 aa)) is the Protein kinase domain. ATP is bound by residues 47–55 (LGEGEFGKV) and lysine 80. Residue aspartate 175 is the Proton acceptor of the active site. Positions 341–398 (KPRRRYGSRPQSSCSTSSLGSRSDKRDSLVIDSTLITFPAPPQESQNHIITRPASIAS) are disordered. A compositionally biased stretch (low complexity) spans 352 to 361 (SSCSTSSLGS). Serine 441 carries the post-translational modification Phosphoserine. Disordered regions lie at residues 480–554 (ISGS…YTTP), 673–733 (TEES…LNEA), and 754–782 (SLYS…YQTN). Residues 494-538 (STTMQTSKIQPNNMASSQNHQYNKNKTQNSLQSAKNFYRTSSSSH) show a composition bias toward polar residues. Composition is skewed to basic and acidic residues over residues 690–708 (EGQE…EKGS) and 724–733 (NHLERSLNEA).

Belongs to the protein kinase superfamily. Ser/Thr protein kinase family. As to quaternary structure, interacts with FAA3, POL5 and TPA1.

Its subcellular location is the cytoplasm. It catalyses the reaction L-seryl-[protein] + ATP = O-phospho-L-seryl-[protein] + ADP + H(+). The enzyme catalyses L-threonyl-[protein] + ATP = O-phospho-L-threonyl-[protein] + ADP + H(+). Putative serine/threonine-protein kinase that may be involved in rRNA transcription and ribosome biogenesis. In Saccharomyces cerevisiae (strain ATCC 204508 / S288c) (Baker's yeast), this protein is Fatty acyl-CoA synthetase and RNA processing-associated kinase 1 (FRK1).